The primary structure comprises 361 residues: Probable galacturonosyltransferase-like 7 (361 aa).

A helical; Signal-anchor for type II membrane protein membrane pass occupies residues methionine 1–serine 21. The Lumenal portion of the chain corresponds to proline 22–arginine 361. Asparagine 217 carries an N-linked (GlcNAc...) asparagine glycan.

This sequence belongs to the glycosyltransferase 8 family.

It localises to the golgi apparatus membrane. Its pathway is glycan metabolism; pectin biosynthesis. May be involved in pectin and/or xylans biosynthesis in cell walls. The chain is Probable galacturonosyltransferase-like 7 (GATL7) from Arabidopsis thaliana (Mouse-ear cress).